A 67-amino-acid polypeptide reads, in one-letter code: Bowman-Birk type proteinase inhibitor 1 (67 aa).

7 disulfide bridges follow: Cys-5–Cys-59, Cys-6–Cys-21, Cys-9–Cys-55, Cys-11–Cys-19, Cys-29–Cys-36, Cys-33–Cys-48, and Cys-38–Cys-46.

It belongs to the Bowman-Birk serine protease inhibitor family. Monomer. Although dimerization may occur in solution. Seed.

Inhibits trypsin but not chymotrypsin. The inhibitor consists of 2 domains and has 2 sites of interaction with trypsin. The polypeptide is Bowman-Birk type proteinase inhibitor 1 (Dioclea glabra).